The following is a 389-amino-acid chain: Shewanella-like protein phosphatase 1 (389 aa).

Residues 1–53 (MASLYLNSLLPLPPSHPQKLLEPSSSSLLSTSNGNELALKPIVINGDPPTFVS) constitute a chloroplast transit peptide. 4 residues coordinate Mn(2+): Asp-64, His-66, Asp-102, and Asn-137. The active-site Proton donor is His-138. Residues His-242 and His-314 each coordinate Mn(2+).

Belongs to the metallophosphoesterase superfamily. SLP family. The cofactor is Mn(2+). Expressed in rosettes leaves, shoots and flowers (at protein level).

It localises to the plastid. Its subcellular location is the chloroplast. In terms of biological role, shows phosphatase activity, hydrolyzing the artificial substrate para-nitrophenylphosphate (pNPP) in vitro. This is Shewanella-like protein phosphatase 1 from Arabidopsis thaliana (Mouse-ear cress).